A 104-amino-acid polypeptide reads, in one-letter code: Large ribosomal subunit protein uL24 (104 aa).

It belongs to the universal ribosomal protein uL24 family. In terms of assembly, part of the 50S ribosomal subunit.

Its function is as follows. One of two assembly initiator proteins, it binds directly to the 5'-end of the 23S rRNA, where it nucleates assembly of the 50S subunit. Functionally, one of the proteins that surrounds the polypeptide exit tunnel on the outside of the subunit. The sequence is that of Large ribosomal subunit protein uL24 from Bartonella tribocorum (strain CIP 105476 / IBS 506).